The sequence spans 821 residues: Envelope glycoprotein gp160 (821 aa).

The Extracellular segment spans residues 1-737 (MSTGNVYQEL…FTWWVQYLKW (737 aa)). An intrachain disulfide couples C67 to C80. 16 N-linked (GlcNAc...) asparagine; by host glycosylation sites follow: N71, N98, N144, N175, N190, N215, N224, N266, N287, N333, N383, N389, N394, N423, N447, and N516. Cystine bridges form between C127/C232, C134/C223, C139/C187, and C244/C272. Positions 139 to 186 (CQETENVSATTAKPITTPTTTSTVASSTEIYLDVDKNNTEEKVERNHV) are V1. Positions 187 to 223 (CRYNITGLCRDSKEEIVTNFRGDDVKCENNTCYMNHC) are V2. The tract at residues 328-361 (CHRKGNRSVVSTPSATGLLFYHGLEPGKNLKKGM) is V3. 2 disulfides stabilise this stretch: C439-C499 and C446-C469. Positions 446-469 (CNVTRIMRAWNDPNEKKWYPYASC) are V4. The segment at 515-526 (SNETKMQIKFLP) is V5. Residues 570–590 (GAVILGILGLLSLAGSAMGSV) are fusion peptide. Positions 607–627 (EQQKQLLKLIEQQSELLKLTI) form a coiled coil. N-linked (GlcNAc...) asparagine; by host glycosylation is found at N669, N675, and N694. The segment at 715–736 (KLGDLTSWASWFDFTWWVQYLK) is MPER; binding to GalCer. The helical transmembrane segment at 738 to 758 (GVFLVLGIIGLRILLALWNTI) threads the bilayer. The Cytoplasmic portion of the chain corresponds to 759–821 (SRFRQGYRPV…IEDLTSFARE (63 aa)). Positions 765–768 (YRPV) match the YXXV motif; contains endocytosis signal motif. The tract at residues 780–805 (KRPDNGEEESNSLELGEHNSENLKEE) is disordered. Residues 794-805 (LGEHNSENLKEE) show a composition bias toward basic and acidic residues.

In terms of assembly, the mature envelope protein (Env) consists of a homotrimer of non-covalently associated gp120-gp41 heterodimers. The resulting complex protrudes from the virus surface as a spike. Interacts with host CD4 and CCR5. Gp120 also interacts with the C-type lectins CD209/DC-SIGN and CLEC4M/DC-SIGNR (collectively referred to as DC-SIGN(R)). As to quaternary structure, the mature envelope protein (Env) consists of a homotrimer of non-covalently associated gp120-gp41 heterodimers. The resulting complex protrudes from the virus surface as a spike. In terms of processing, specific enzymatic cleavages in vivo yield mature proteins. Envelope glycoproteins are synthesized as an inactive precursor that is heavily N-glycosylated and processed likely by host cell furin in the Golgi to yield the mature SU and TM proteins. The cleavage site between SU and TM requires the minimal sequence [KR]-X-[KR]-R.

It is found in the virion membrane. Its subcellular location is the host cell membrane. The protein localises to the host endosome membrane. The surface protein gp120 (SU) attaches the virus to the host lymphoid cell by binding to the primary receptor CD4. This interaction induces a structural rearrangement creating a high affinity binding site for a chemokine coreceptor like CCR5. This peculiar 2 stage receptor-interaction strategy allows gp120 to maintain the highly conserved coreceptor-binding site in a cryptic conformation, protected from neutralizing antibodies. These changes are transmitted to the transmembrane protein gp41 and are thought to activate its fusogenic potential by unmasking its fusion peptide. In terms of biological role, surface protein gp120 (SU) may target the virus to gut-associated lymphoid tissue (GALT) by binding host ITGA4/ITGB7 (alpha-4/beta-7 integrins), a complex that mediates T-cell migration to the GALT. Interaction between gp120 and ITGA4/ITGB7 would allow the virus to enter GALT early in the infection, infecting and killing most of GALT's resting CD4+ T-cells. This T-cell depletion is believed to be the major insult to the host immune system leading to AIDS. Functionally, the surface protein gp120 is a ligand for CD209/DC-SIGN and CLEC4M/DC-SIGNR, which are respectively found on dendritic cells (DCs), and on endothelial cells of liver sinusoids and lymph node sinuses. These interactions allow capture of viral particles at mucosal surfaces by these cells and subsequent transmission to permissive cells. DCs are professional antigen presenting cells, critical for host immunity by inducing specific immune responses against a broad variety of pathogens. They act as sentinels in various tissues where they take up antigen, process it, and present it to T-cells following migration to lymphoid organs. SIV subverts the migration properties of dendritic cells to gain access to CD4+ T-cells in lymph nodes. Virus transmission to permissive T-cells occurs either in trans (without DCs infection, through viral capture and transmission), or in cis (following DCs productive infection, through the usual CD4-gp120 interaction), thereby inducing a robust infection. In trans infection, bound virions remain infectious over days and it is proposed that they are not degraded, but protected in non-lysosomal acidic organelles within the DCs close to the cell membrane thus contributing to the viral infectious potential during DCs' migration from the periphery to the lymphoid tissues. On arrival at lymphoid tissues, intact virions recycle back to DCs' cell surface allowing virus transmission to CD4+ T-cells. Virion capture also seems to lead to MHC-II-restricted viral antigen presentation, and probably to the activation of SIV-specific CD4+ cells. Its function is as follows. The transmembrane protein gp41 (TM) acts as a class I viral fusion protein. Under the current model, the protein has at least 3 conformational states: pre-fusion native state, pre-hairpin intermediate state, and post-fusion hairpin state. During fusion of viral and target intracellular membranes, the coiled coil regions (heptad repeats) assume a trimer-of-hairpins structure, positioning the fusion peptide in close proximity to the C-terminal region of the ectodomain. The formation of this structure appears to drive apposition and subsequent fusion of viral and target cell membranes. Complete fusion occurs in host cell endosomes. The virus undergoes clathrin-dependent internalization long before endosomal fusion, thus minimizing the surface exposure of conserved viral epitopes during fusion and reducing the efficacy of inhibitors targeting these epitopes. Membranes fusion leads to delivery of the nucleocapsid into the cytoplasm. The envelope glycoprotein gp160 precursor down-modulates cell surface CD4 antigen by interacting with it in the endoplasmic reticulum and blocking its transport to the cell surface. In terms of biological role, the gp120-gp41 heterodimer allows rapid transcytosis of the virus through CD4 negative cells such as simple epithelial monolayers of the intestinal, rectal and endocervical epithelial barriers. Both gp120 and gp41 specifically recognize glycosphingolipids galactosyl-ceramide (GalCer) or 3' sulfo-galactosyl-ceramide (GalS) present in the lipid rafts structures of epithelial cells. Binding to these alternative receptors allows the rapid transcytosis of the virus through the epithelial cells. This transcytotic vesicle-mediated transport of virions from the apical side to the basolateral side of the epithelial cells does not involve infection of the cells themselves. This chain is Envelope glycoprotein gp160 (env), found in Cercopithecidae (Old World monkeys).